We begin with the raw amino-acid sequence, 206 residues long: MKKYFITAISTDSGKTLVSAILTNALQADYWKPVQAGLEETDSNTIRTLLHSGHSIIHPEAYALKQAVSPHAAARNEGVEIVLAAIQLPDTNGNDLIIEGAGGVLVPLNDTDVVADLITQFDAEVILVSNLYLGSINHTLLTAQELKRRNIRVKGIVFNGPRNEESERIILKHTGYKVLLHVSPEEKITKEVVTAYAVKLFDNWYE.

12–17 (DSGKTL) contacts ATP. Residue T16 participates in Mg(2+) binding. K32 is a catalytic residue. Residue E99 participates in Mg(2+) binding. An ATP-binding site is contributed by 99-102 (EGAG).

Belongs to the dethiobiotin synthetase family. As to quaternary structure, homodimer. The cofactor is Mg(2+).

It localises to the cytoplasm. It catalyses the reaction (7R,8S)-7,8-diammoniononanoate + CO2 + ATP = (4R,5S)-dethiobiotin + ADP + phosphate + 3 H(+). Its pathway is cofactor biosynthesis; biotin biosynthesis; biotin from 7,8-diaminononanoate: step 1/2. Its function is as follows. Catalyzes a mechanistically unusual reaction, the ATP-dependent insertion of CO2 between the N7 and N8 nitrogen atoms of 7,8-diaminopelargonic acid (DAPA, also called 7,8-diammoniononanoate) to form a ureido ring. The chain is ATP-dependent dethiobiotin synthetase BioD from Cytophaga hutchinsonii (strain ATCC 33406 / DSM 1761 / CIP 103989 / NBRC 15051 / NCIMB 9469 / D465).